Here is a 1368-residue protein sequence, read N- to C-terminus: DNA-directed RNA polymerase subunit beta (1368 aa).

It belongs to the RNA polymerase beta chain family. In terms of assembly, the RNAP catalytic core consists of 2 alpha, 1 beta, 1 beta' and 1 omega subunit. When a sigma factor is associated with the core the holoenzyme is formed, which can initiate transcription.

The catalysed reaction is RNA(n) + a ribonucleoside 5'-triphosphate = RNA(n+1) + diphosphate. DNA-dependent RNA polymerase catalyzes the transcription of DNA into RNA using the four ribonucleoside triphosphates as substrates. The protein is DNA-directed RNA polymerase subunit beta of Legionella pneumophila (strain Paris).